A 235-amino-acid polypeptide reads, in one-letter code: MNTSIKNWPEQERPRERLLQQGPQSLSDSELLAIFLRSGSRQHSAVELARLLIQQFGSLNAVFDASYNELAQFNGIGATKYSQLLAVKELGRRYLDYHFSQTELSLHSSHLVLDYLRYELKGEKQEVFAVLCLDAELRKLHFKKLFFGSVQHCAVSVNQTLRYALQQHACQLVIAHNHPFGSPQPSPEDIKLTQQLEQACQLVEIRLLDHFIISPEGSFSFAEQQLLNPTSIAVQ.

Residues 1–20 (MNTSIKNWPEQERPRERLLQ) form a disordered region. Residues 9-18 (PEQERPRERL) show a composition bias toward basic and acidic residues. One can recognise an MPN domain in the interval 105-227 (SLHSSHLVLD…SFSFAEQQLL (123 aa)). Residues histidine 176, histidine 178, and aspartate 189 each contribute to the Zn(2+) site. Residues 176–189 (HNHPFGSPQPSPED) carry the JAMM motif motif.

The protein belongs to the UPF0758 family.

The sequence is that of UPF0758 protein A1S_2918 from Acinetobacter baumannii (strain ATCC 17978 / DSM 105126 / CIP 53.77 / LMG 1025 / NCDC KC755 / 5377).